Reading from the N-terminus, the 425-residue chain is Histidine--tRNA ligase (425 aa).

Belongs to the class-II aminoacyl-tRNA synthetase family. Homodimer.

Its subcellular location is the cytoplasm. It carries out the reaction tRNA(His) + L-histidine + ATP = L-histidyl-tRNA(His) + AMP + diphosphate + H(+). The sequence is that of Histidine--tRNA ligase from Buchnera aphidicola subsp. Baizongia pistaciae (strain Bp).